Consider the following 837-residue polypeptide: Periplasmic nitrate reductase (837 aa).

The tat-type signal signal peptide spans 1-31; sequence MKLNRRDFIKANAAAAAISAAGLSVPGAAVA. One can recognise a 4Fe-4S Mo/W bis-MGD-type domain in the interval 37–93; it reads IRWDKAACRFCGTGCGVLVGTQDGRVVATQGDPDAPVNRGLNCIKGYFLSKIMYGAD. 4 residues coordinate [4Fe-4S] cluster: Cys-44, Cys-47, Cys-51, and Cys-79. Mo-bis(molybdopterin guanine dinucleotide) contacts are provided by residues Lys-81, Gln-148, Asn-173, Cys-177, 210-217, 241-245, and 260-262; these read WGSNMAEM, STFEH, and QTD. Residues 308-329 are disordered; sequence EKNATSNGYPDADGKPKGDTGK. The segment covering 319–329 has biased composition (basic and acidic residues); it reads ADGKPKGDTGK. Mo-bis(molybdopterin guanine dinucleotide) contacts are provided by residues Met-381, Gln-385, Asn-491, 517–518, Lys-540, Asp-567, and 727–736; these read SD and TGRVLEHWHT. Phe-803 contributes to the substrate binding site. Residues Asn-811 and Lys-828 each contribute to the Mo-bis(molybdopterin guanine dinucleotide) site.

This sequence belongs to the prokaryotic molybdopterin-containing oxidoreductase family. NasA/NapA/NarB subfamily. In terms of assembly, component of the periplasmic nitrate reductase NapAB complex composed of NapA and NapB. [4Fe-4S] cluster serves as cofactor. Mo-bis(molybdopterin guanine dinucleotide) is required as a cofactor. In terms of processing, predicted to be exported by the Tat system. The position of the signal peptide cleavage has not been experimentally proven.

It is found in the periplasm. The enzyme catalyses 2 Fe(II)-[cytochrome] + nitrate + 2 H(+) = 2 Fe(III)-[cytochrome] + nitrite + H2O. Its function is as follows. Catalytic subunit of the periplasmic nitrate reductase complex NapAB. Receives electrons from NapB and catalyzes the reduction of nitrate to nitrite. This chain is Periplasmic nitrate reductase, found in Dechloromonas aromatica (strain RCB).